Consider the following 658-residue polypeptide: Threonine--tRNA ligase (658 aa).

One can recognise a TGS domain in the interval methionine 1–glutamate 61. A catalytic region spans residues aspartate 259–proline 554. Residues cysteine 353, histidine 404, and histidine 531 each coordinate Zn(2+).

Belongs to the class-II aminoacyl-tRNA synthetase family. As to quaternary structure, homodimer. It depends on Zn(2+) as a cofactor.

The protein resides in the cytoplasm. The enzyme catalyses tRNA(Thr) + L-threonine + ATP = L-threonyl-tRNA(Thr) + AMP + diphosphate + H(+). In terms of biological role, catalyzes the attachment of threonine to tRNA(Thr) in a two-step reaction: L-threonine is first activated by ATP to form Thr-AMP and then transferred to the acceptor end of tRNA(Thr). Also edits incorrectly charged L-seryl-tRNA(Thr). This Streptomyces coelicolor (strain ATCC BAA-471 / A3(2) / M145) protein is Threonine--tRNA ligase.